Consider the following 105-residue polypeptide: Large ribosomal subunit protein uL24 (105 aa).

The protein belongs to the universal ribosomal protein uL24 family. In terms of assembly, part of the 50S ribosomal subunit.

In terms of biological role, one of two assembly initiator proteins, it binds directly to the 5'-end of the 23S rRNA, where it nucleates assembly of the 50S subunit. One of the proteins that surrounds the polypeptide exit tunnel on the outside of the subunit. This is Large ribosomal subunit protein uL24 from Saccharophagus degradans (strain 2-40 / ATCC 43961 / DSM 17024).